We begin with the raw amino-acid sequence, 520 residues long: Glucose-1-phosphate adenylyltransferase small subunit, chloroplastic (520 aa).

A chloroplast-targeting transit peptide spans 1 to 71 (MATMAAIGSL…RTPSIVSPKA (71 aa)). Residues 1–81 (MATMAAIGSL…VSDSQNSQTC (81 aa)) are disordered. Low complexity predominate over residues 14 to 27 (SSSSNHTRRLSSSS). Polar residues predominate over residues 28 to 51 (QRKTLSFSSSSLTGEKLNPTQEII).

It belongs to the bacterial/plant glucose-1-phosphate adenylyltransferase family. In terms of assembly, heterotetramer. As to expression, leaves.

Its subcellular location is the plastid. It is found in the chloroplast. It carries out the reaction alpha-D-glucose 1-phosphate + ATP + H(+) = ADP-alpha-D-glucose + diphosphate. It functions in the pathway glycan biosynthesis; starch biosynthesis. Activated by 3'phosphoglycerate, inhibited by orthophosphate. Allosteric regulation. This protein plays a role in synthesis of starch. It catalyzes the synthesis of the activated glycosyl donor, ADP-glucose from Glc-1-P and ATP. The polypeptide is Glucose-1-phosphate adenylyltransferase small subunit, chloroplastic (AGPS1) (Brassica napus (Rape)).